The sequence spans 299 residues: MKPDAHHVKQFLLRLQDDICQKLSAADGANFVEDSWRREAGGGGRSRVLRNGGIFEQAGVNFSHVHGDAMPASATAHRPELAGRSFEAMGVSLVVHPHNPYIPTSHANVRFFIAEKPGADPVWWFGGGFDLTPYYGFEEDAVHWHRTARDLCQPFGDDVYPRYKKWCDDYFFLKHRNEQRGVGGLFFDDLNTPDFDHCFAFMQAVGNGYTQAYLPIVERRKAMVWGERERNFQLYRRGRYVEFNLVWDRGTLFGLQTGGRTESILMSMPPLVRWEYDWQPEAGSPEAALSEFIQVRDWV.

Ser-92 provides a ligand contact to substrate. Residues His-96 and His-106 each coordinate a divalent metal cation. His-106 functions as the Proton donor in the catalytic mechanism. 108-110 (NVR) serves as a coordination point for substrate. A divalent metal cation-binding residues include His-145 and His-175. The interval 240-275 (YVEFNLVWDRGTLFGLQTGGRTESILMSMPPLVRWE) is important for dimerization. A substrate-binding site is contributed by 258–260 (GGR).

It belongs to the aerobic coproporphyrinogen-III oxidase family. As to quaternary structure, homodimer. A divalent metal cation serves as cofactor.

The protein resides in the cytoplasm. It carries out the reaction coproporphyrinogen III + O2 + 2 H(+) = protoporphyrinogen IX + 2 CO2 + 2 H2O. It participates in porphyrin-containing compound metabolism; protoporphyrin-IX biosynthesis; protoporphyrinogen-IX from coproporphyrinogen-III (O2 route): step 1/1. Functionally, involved in the heme biosynthesis. Catalyzes the aerobic oxidative decarboxylation of propionate groups of rings A and B of coproporphyrinogen-III to yield the vinyl groups in protoporphyrinogen-IX. This chain is Oxygen-dependent coproporphyrinogen-III oxidase, found in Salmonella schwarzengrund (strain CVM19633).